Here is a 148-residue protein sequence, read N- to C-terminus: MPTHTSKTRKLRGHVSAGHGRIGKHRKHPGGRGKAGGLQHLRSHFDKYHPGYFGKVGMRRFHLMKNPLWRPTVNLDRLWTLVPNETREKYLGKNTEVAPVINVLQSGYGKVLGKGRLPDTPVIIQTRYVSRRAEEKIKQAGGVVELIA.

Composition is skewed to basic residues over residues 1–13 and 21–31; these read MPTHTSKTRKLRG and RIGKHRKHPGG. Residues 1-38 form a disordered region; that stretch reads MPTHTSKTRKLRGHVSAGHGRIGKHRKHPGGRGKAGGL. Tyr108 is subject to Phosphotyrosine.

This sequence belongs to the universal ribosomal protein uL15 family. Component of the large ribosomal subunit (LSU). Mature yeast ribosomes consist of a small (40S) and a large (60S) subunit. The 40S small subunit contains 1 molecule of ribosomal RNA (18S rRNA) and at least 33 different proteins. The large 60S subunit contains 3 rRNA molecules (25S, 5.8S and 5S rRNA) and at least 46 different proteins.

It localises to the cytoplasm. The protein localises to the nucleus. It is found in the nucleolus. In terms of biological role, component of the ribosome, a large ribonucleoprotein complex responsible for the synthesis of proteins in the cell. The small ribosomal subunit (SSU) binds messenger RNAs (mRNAs) and translates the encoded message by selecting cognate aminoacyl-transfer RNA (tRNA) molecules. The large subunit (LSU) contains the ribosomal catalytic site termed the peptidyl transferase center (PTC), which catalyzes the formation of peptide bonds, thereby polymerizing the amino acids delivered by tRNAs into a polypeptide chain. The nascent polypeptides leave the ribosome through a tunnel in the LSU and interact with protein factors that function in enzymatic processing, targeting, and the membrane insertion of nascent chains at the exit of the ribosomal tunnel. In Schizosaccharomyces pombe (strain 972 / ATCC 24843) (Fission yeast), this protein is Large ribosomal subunit protein uL15B (rpl2801).